We begin with the raw amino-acid sequence, 243 residues long: Anti-sigma-K factor RskA (243 aa).

Residues 1 to 102 (MTEPNNTDLL…RGGESRWRTA (102 aa)) lie on the Cytoplasmic side of the membrane. A helical membrane pass occupies residues 103-123 (VLAAAAVAVVGLGALGVGLAL). Over 124–243 (RPAVSPTTAD…SPAFAELPLT (120 aa)) the chain is Extracellular. The interval 223–243 (VEPPGGSQRPTSPAFAELPLT) is disordered.

This sequence belongs to the anti-sigma-K factor family.

It is found in the cell membrane. Its function is as follows. An anti-sigma factor for extracytoplasmic function (ECF) sigma factor SigK. ECF sigma factors are held in an inactive form by an anti-sigma factor until released by regulated intramembrane proteolysis (RIP). RIP occurs when an extracytoplasmic signal triggers a concerted proteolytic cascade to transmit information and elicit cellular responses. The membrane-spanning regulatory substrate protein is first cut extracytoplasmically (site-1 protease, S1P), then within the membrane itself (site-2 protease, S2P, Rip1), while cytoplasmic proteases finish degrading the regulatory protein, liberating the sigma factor. In Mycobacterium sp. (strain JLS), this protein is Anti-sigma-K factor RskA (rskA).